Reading from the N-terminus, the 253-residue chain is MKQYIVLACMCLAAAAMPASLQQSSSSCTEEENKHYMGIDVIIKVTKQDQTPTNDKICQSVTEITESESDPEVESEDDSTSVEDVDPPTTYYSIIGGGLRMNFGFTKCPQIKSISESANGNAVNARLSSVPLGQGKDSPAITRAEALAMIKDCELSIDIRCSEEEKDSDIQTHPVLESNISHKKVSYEDIIGSTIVDTKCVKNLEFSVRIGDMCKESSDLEVKDGFKYVDGSVSEGVTDDTSLIDSTKLKSCV.

The first 17 residues, 1-17 (MKQYIVLACMCLAAAAM), serve as a signal peptide directing secretion. A disordered region spans residues 62–87 (TEITESESDPEVESEDDSTSVEDVDP). Residues 65 to 86 (TESESDPEVESEDDSTSVEDVD) are compositionally biased toward acidic residues.

Belongs to the orthopoxvirus OPG001 family. In terms of assembly, binds to host CC chemokines, such as RANTES/CCL5, MIP-1alpha/CCL3, MCP-1/CCL2 and eotaxin.

It is found in the secreted. In terms of biological role, inhibits host immune defense by binding to host chemokines. Binds host CC chemokines (beta chemokines) such as RANTES with high affinity, but not CXC or C chemokines (alpha and gamma chemokines). The chain is Chemokine-binding protein (OPG001) from Variola virus (isolate Human/India/Ind3/1967) (VARV).